Reading from the N-terminus, the 319-residue chain is 7,8-didemethyl-8-hydroxy-5-deazariboflavin synthase (319 aa).

Positions 6 to 236 (VTYSPAFTLV…AEITIQIPPN (231 aa)) constitute a Radical SAM core domain. Positions 20, 24, and 27 each coordinate [4Fe-4S] cluster.

The protein belongs to the radical SAM superfamily. CofG family. As to quaternary structure, consists of two subunits, CofG and CofH. [4Fe-4S] cluster is required as a cofactor.

The enzyme catalyses 5-amino-5-(4-hydroxybenzyl)-6-(D-ribitylimino)-5,6-dihydrouracil + S-adenosyl-L-methionine = 7,8-didemethyl-8-hydroxy-5-deazariboflavin + 5'-deoxyadenosine + L-methionine + NH4(+) + H(+). It functions in the pathway cofactor biosynthesis; coenzyme F0 biosynthesis. Its function is as follows. Catalyzes the radical-mediated synthesis of 7,8-didemethyl-8-hydroxy-5-deazariboflavin from 5-amino-5-(4-hydroxybenzyl)-6-(D-ribitylimino)-5,6-dihydrouracil. The polypeptide is 7,8-didemethyl-8-hydroxy-5-deazariboflavin synthase (Gloeobacter violaceus (strain ATCC 29082 / PCC 7421)).